The chain runs to 253 residues: Tetraspanin-3 (253 aa).

Residues 1–11 (MGQCGITSSKT) are Cytoplasmic-facing. Residues 12 to 32 (VLVFLNLIFWGAAGILCYVGA) form a helical membrane-spanning segment. The Extracellular portion of the chain corresponds to 33-50 (YVFITYDDYDHFFEDVYT). The helical transmembrane segment at 51–71 (LFPAVVIIAVGALLFIIGLIG) threads the bilayer. Residues 72 to 85 (CCATIRESRCGLAT) are Cytoplasmic-facing. A helical membrane pass occupies residues 86–106 (FVFILLLVFVTEVVVVVLGYV). The Extracellular segment spans residues 107–212 (YRAKVENEVD…KKLQEILMHV (106 aa)). N-linked (GlcNAc...) asparagine glycans are attached at residues Asn127, Asn152, Asn167, and Asn183. The helical transmembrane segment at 213–233 (IWAALAFAAIQLLGMLCACIV) threads the bilayer. The Cytoplasmic portion of the chain corresponds to 234-253 (LCRRSRDPAYELLITGGTYA).

It belongs to the tetraspanin (TM4SF) family. As to quaternary structure, interacts with claudin-11/CLDN11 and integrins.

It localises to the membrane. Functionally, regulates the proliferation and migration of oligodendrocytes, a process essential for normal myelination and repair. This chain is Tetraspanin-3 (Tspan3), found in Mus musculus (Mouse).